We begin with the raw amino-acid sequence, 232 residues long: T-cell surface glycoprotein CD1b-3 (232 aa).

At 1 to 201 the chain is on the extracellular side; the sequence is GLQEFQFEYP…LYWGHPMYIG (201 aa). Cystine bridges form between cysteine 19–cysteine 83, cysteine 48–cysteine 62, and cysteine 123–cysteine 178. The N-linked (GlcNAc...) asparagine glycan is linked to asparagine 45. The region spanning 84 to 194 is the Ig-like domain; sequence PRYLLGVLDA…LGDQDIILYW (111 aa). A helical transmembrane segment spans residues 202-222; the sequence is LIFVAIIVPSLILLICLALWF. At 223–232 the chain is on the cytoplasmic side; the sequence is WRRWSYQTVL.

As to quaternary structure, heterodimer with B2M (beta-2-microglobulin). Interacts with saposin C.

It localises to the cell membrane. The protein localises to the endosome membrane. Its subcellular location is the lysosome membrane. In terms of biological role, antigen-presenting protein that binds self and non-self lipid and glycolipid antigens and presents them to T-cell receptors on natural killer T-cells. This is T-cell surface glycoprotein CD1b-3 from Ovis aries (Sheep).